Reading from the N-terminus, the 714-residue chain is Delta-like protein 1 (714 aa).

Positions 1 to 17 (MGRRSALALAVVSALLC) are cleaved as a signal peptide. Over 18–537 (QVWSSGVFEL…VAAQGGSFPW (520 aa)) the chain is Extracellular. One can recognise a DSL domain in the interval 176 to 220 (FVCDEHYYGEGCSVFCRPRDDAFGHFTCGERGEKMCDPGWKGQYC). Cystine bridges form between Cys-178–Cys-187, Cys-191–Cys-203, Cys-211–Cys-220, Cys-225–Cys-236, Cys-229–Cys-242, Cys-244–Cys-253, Cys-256–Cys-267, Cys-262–Cys-273, Cys-275–Cys-284, Cys-291–Cys-303, Cys-297–Cys-313, Cys-315–Cys-324, Cys-331–Cys-342, Cys-336–Cys-351, Cys-353–Cys-362, Cys-369–Cys-380, Cys-374–Cys-390, Cys-392–Cys-401, Cys-408–Cys-419, Cys-413–Cys-428, Cys-430–Cys-439, Cys-446–Cys-457, Cys-451–Cys-466, Cys-468–Cys-477, Cys-484–Cys-495, Cys-489–Cys-504, and Cys-506–Cys-515. 3 consecutive EGF-like domains span residues 225–253 (CLPGCDDQHGYCDKPGECKCRVGWQGRYC), 256–284 (CIRYPGCLHGTCQQPWQCNCQEGWGGLFC), and 291–324 (CTHHKPCRNGATCTNTGQGSYTCSCRPGYTGANC). The EGF-like 4; calcium-binding domain maps to 331-362 (CAPSPCRNGGSCTDLEDSYSCTCPPGFYGKVC). EGF-like domains follow at residues 369–401 (CADGPCFNGGRCSDNPDGGYTCHCPAGFSGFNC) and 408–439 (CSSSPCSNGAKCVDLGNSYLCRCQTGFSGRYC). One can recognise an EGF-like 7; calcium-binding domain in the interval 446 to 477 (CASSPCANGGTCRDSVNDFSCTCPPGYTGRNC). The N-linked (GlcNAc...) asparagine glycan is linked to Asn-476. In terms of domain architecture, EGF-like 8 spans 484–515 (CEHAPCHNGATCHQRGQRYMCECAQGYGGANC). Residues 538–560 (VAVCAGVVLVLLLLLGCAAVVVC) form a helical membrane-spanning segment. Over 561–714 (VRLKLQKHQP…KDECVIATEV (154 aa)) the chain is Cytoplasmic. A Glycyl lysine isopeptide (Lys-Gly) (interchain with G-Cter in ubiquitin) cross-link involves residue Lys-605. Thr-630 bears the Phosphothreonine mark. Over residues 644 to 656 (ATVRDAHSKRDTK) the composition is skewed to basic and acidic residues. The interval 644–690 (ATVRDAHSKRDTKCQSQGSVGEEKSTSTLRGGEVPDRKRPESVYSTS) is disordered. Ser-685 is subject to Phosphoserine; by PKB. Ser-688 is modified (phosphoserine). The tract at residues 711–714 (ATEV) is interaction with MAGI1.

In terms of assembly, homodimer. Interacts with TJP1. Interacts with MAGI1 (via PDZ domain); forms a complex with CTNNB1 and CDH2 and promotes recruitment to the adherens junction and stabilization on the cell surface. Interacts with PSEN1; undergoes a presenilin-dependent gamma-secretase cleavage that releases a Dll1-intracellular form. Interacts with MFAP5. Interacts with MIB1. Interacts with NEURL1B; leads to ubiquitination. Interacts with NEURL1. Interacts with SYNJ2BP; enhances DLL1 protein stability, and promotes Notch signaling in endothelial cells. Interacts with MAGI1, MAGI2, MAGI3 and MPDZ. Interacts (via ubiquitin) with EPN1 (via IUM domain); binding with NOTCH1 attached to neighboring cell, promotes ligand ubiquitination and EPN1 interaction, leading to NECD transendocytosis and Notch signaling. Interacts with NOTCH1. Post-translationally, ubiquitinated by MIB (MIB1 or MIB2), leading to its endocytosis and subsequent degradation. Ubiquitinated; promotes recycling back to the plasma membrane and confers a strong affinity for NOTCH1. Mono- and multi-ubiquitinated. Multi-ubiquitination of Lys-605 by MIB1 promotes both cis and trans-interaction with NOTCH1, as well as activation of Notch signaling. Ubiquitinated by NEURL1B. Phosphorylated in a membrane association-dependent manner. Phosphorylation at Ser-688 requires the presence of Ser-685, whereas phosphorylation at Thr-630 and Ser-685 occur independently of the other sites. Phosphorylation is required for full ligand activity in vitro and affects surface presentation, ectodomain shedding, and endocytosis. In terms of processing, O-fucosylated. Can be elongated to a disaccharide by MFNG.

The protein localises to the apical cell membrane. Its subcellular location is the cell junction. The protein resides in the adherens junction. It localises to the membrane raft. Functionally, transmembrane ligand protein of NOTCH1, NOTCH2 and NOTCH3 receptors that binds the extracellular domain (ECD) of Notch receptor in a cis and trans fashion manner. Following transinteraction, ligand cells produce mechanical force that depends of a clathrin-mediated endocytosis, requiring ligand ubiquitination, EPN1 interaction, and actin polymerisation; these events promote Notch receptor extracellular domain (NECD) transendocytosis and triggers Notch signaling through induction of cleavage, hyperphosphorylation, and nuclear accumulation of the intracellular domain of Notch receptors (NICD). Is required for embryonic development and maintenance of adult stem cells in many different tissues and immune systeme; the DLL1-induced Notch signaling is mediated through an intercellular communication that regulates cell lineage, cell specification, cell patterning and morphogenesis through effects on differentiation and proliferation. Plays a role in brain development at different level, namely by regulating neuronal differentiation of neural precursor cells via cell-cell interaction, most likely through the lateral inhibitory system in an endogenous level dependent-manner. During neocortex development, Dll1-Notch signaling transmission is mediated by dynamic interactions between intermediate neurogenic progenitors and radial glia; the cell-cell interactions are mediated via dynamic and transient elongation processes, likely to reactivate/maintain Notch activity in neighboring progenitors, and coordinate progenitor cell division and differentiation across radial and zonal boundaries. During cerebellar development, regulates Bergmann glial monolayer formation and its morphological maturation through a Notch signaling pathway. At the retina and spinal cord level, regulates neurogenesis by preventing the premature differentiation of neural progenitors and also by maintaining progenitors in spinal cord through Notch signaling pathway. Also controls neurogenesis of the neural tube in a progenitor domain-specific fashion along the dorsoventral axis. Maintains quiescence of neural stem cells and plays a role as a fate determinant that segregates asymmetrically to one daughter cell during neural stem cells mitosis, resulting in neuronal differentiation in Dll1-inheriting cell. Plays a role in immune systeme development, namely the development of all T-cells and marginal zone (MZ) B cells. Blocks the differentiation of progenitor cells into the B-cell lineage while promoting the emergence of a population of cells with the characteristics of a T-cell/NK-cell precursor. Also plays a role during muscle development. During early development, inhibits myoblasts differentiation from the medial dermomyotomal lip and later regulates progenitor cell differentiation. Directly modulates cell adhesion and basal lamina formation in satellite cells through Notch signaling. Maintains myogenic progenitors pool by suppressing differentiation through down-regulation of MYOD1 and is required for satellite cell homing and PAX7 expression. During craniofacial and trunk myogenesis suppresses differentiation of cranial mesoderm-derived and somite-derived muscle via MYOD1 regulation but in cranial mesoderm-derived progenitors, is neither required for satellite cell homing nor for PAX7 expression. Also plays a role during pancreatic cell development. During type B pancreatic cell development, may be involved in the initiation of proximodistal patterning in the early pancreatic epithelium. Stimulates multipotent pancreatic progenitor cells proliferation and pancreatic growth by maintaining HES1 expression and PTF1A protein levels. During fetal stages of development, is required to maintain arterial identity and the responsiveness of arterial endothelial cells for VEGFA through regulation of KDR activation and NRP1 expression. Controls sprouting angiogenesis and subsequent vertical branch formation through regulation on tip cell differentiation. Negatively regulates goblet cell differentiation in intestine and controls secretory fat commitment through lateral inhibition in small intestine. Plays a role during inner ear development; negatively regulates auditory hair cell differentiation. Plays a role during nephron development through Notch signaling pathway. Regulates growth, blood pressure and energy homeostasis. This is Delta-like protein 1 (Dll1) from Rattus norvegicus (Rat).